The sequence spans 420 residues: Glutamyl-tRNA reductase (420 aa).

Substrate contacts are provided by residues 49–52 (TCNR), serine 109, 114–116 (EPQ), and glutamine 120. Catalysis depends on cysteine 50, which acts as the Nucleophile. Residue 189–194 (GAGETI) coordinates NADP(+).

It belongs to the glutamyl-tRNA reductase family. As to quaternary structure, homodimer.

The catalysed reaction is (S)-4-amino-5-oxopentanoate + tRNA(Glu) + NADP(+) = L-glutamyl-tRNA(Glu) + NADPH + H(+). Its pathway is porphyrin-containing compound metabolism; protoporphyrin-IX biosynthesis; 5-aminolevulinate from L-glutamyl-tRNA(Glu): step 1/2. Catalyzes the NADPH-dependent reduction of glutamyl-tRNA(Glu) to glutamate 1-semialdehyde (GSA). This is Glutamyl-tRNA reductase from Serratia proteamaculans (strain 568).